Consider the following 927-residue polypeptide: F-box only protein 11 (927 aa).

Residues 1 to 132 (MNSVRAANRR…STSTTENFGH (132 aa)) are disordered. A compositionally biased stretch (basic residues) spans 7-16 (ANRRPRRVSR). Residues 17–27 (PRPVQQQQQQP) are compositionally biased toward low complexity. Residues 28-68 (PQQPPPQPPQQQPPQQQPPPPPQQQQQQQPPPPPPPPPPLP) are compositionally biased toward pro residues. The segment covering 114 to 129 (PTKNSMEGASTSTTEN) has biased composition (polar residues). The 47-residue stretch at 153-199 (QYLQEKLPDEVVLKIFSYLLEQDLCRAACVCKRFSELANDPILWKRL) folds into the F-box domain. 19 PbH1 repeats span residues 395–417 (GACP…YITD), 418–440 (HAQG…WVKN), 441–463 (HGNP…FTFD), 464–486 (HGMG…EVKA), 487–509 (YANP…YVHE), 510–532 (KGRG…WITS), 533–555 (NSDP…YIFG), 556–578 (DGRG…QIRT), 579–601 (NSCP…YVHE), 602–624 (KGQG…WVTT), 625–647 (GSTP…YFYD), 648–670 (NGHG…QIRT), 671–693 (GSNP…LVYN), 694–716 (SGLG…WIKT), 717–739 (DSNP…CIFN), 740–762 (GGRG…LIST), 763–785 (NSHP…EITN), 786–808 (HATA…FLAS), and 809–830 (GVNV…EKAV). Residues 833–904 (GQCLYKISSY…LSNPCTLAGE (72 aa)) form a UBR-type zinc finger.

In terms of assembly, component of the SCF(FBXO11) complex consisting of CUL1, RBX1, SKP1 and FBXO11. Interacts with CIITA. In terms of tissue distribution, isoform 5 is expressed in keratinocytes, fibroblasts and melanocytes.

It localises to the nucleus. The protein resides in the chromosome. It participates in protein modification; protein ubiquitination. Its function is as follows. Substrate recognition component of a SCF (SKP1-CUL1-F-box protein) E3 ubiquitin-protein ligase complex which mediates the ubiquitination and subsequent proteasomal degradation of target proteins, such as DTL/CDT2, BCL6, SNAI1 and PRDM1/BLIMP1. The SCF(FBXO11) complex mediates ubiquitination and degradation of BCL6, thereby playing a role in the germinal center B-cells terminal differentiation toward memory B-cells and plasma cells. The SCF(FBXO11) complex also mediates ubiquitination and degradation of DTL, an important step for the regulation of TGF-beta signaling, cell migration and the timing of the cell-cycle progression and exit. The SCF(FBXO11) complex also catalyzes ubiquitination and degradation of GSK3B-phosphorylated SNAI1. Binds to and neddylates phosphorylated p53/TP53, inhibiting its transcriptional activity. Plays a role in the regulatiom of erythropoiesis but not myelopoiesis or megakaryopoiesis. Mechanistically, activates erythroid genes by mediating the degradation of BAHD1, a heterochromatin-associated protein that recruits corepressors to H3K27me3 marks. Participates in macrophage cell death and inflammation in response to bacterial toxins by regulating the expression of complement 5a receptor 1/C5AR1 and IL-1beta. Acts as a critical regulator to determine the level of MHC-II by mediating the recognition of degron at the P/S/T domain of CIITA leading to its ubiquitination and subsequent degradation via the proteasome. Participates in the antiviral repsonse by initiating the activation of TBK1-IRF3-IFN-I axis. Mediates the 'Lys-63'-linked ubiquitination of TRAF3 to strengthen the interaction between TRAF3 and TBK1. The protein is F-box only protein 11 of Homo sapiens (Human).